A 662-amino-acid polypeptide reads, in one-letter code: Chaperone protein dnaK1 (662 aa).

Thr198 carries the phosphothreonine; by autocatalysis modification. The segment at 630-662 is disordered; it reads DWDDDPWAAPSGPPRGRSLNRRDRDPWDDDFYR. A compositionally biased stretch (basic and acidic residues) spans 649 to 662; that stretch reads NRRDRDPWDDDFYR.

This sequence belongs to the heat shock protein 70 family.

In terms of biological role, acts as a chaperone. The sequence is that of Chaperone protein dnaK1 (dnaK1) from Parasynechococcus marenigrum (strain WH8102).